Consider the following 423-residue polypeptide: Pleckstrin homology domain-containing family O member 1 (423 aa).

3 disordered regions span residues 1–21 (MEKN…SAQP), 81–100 (RKSK…AHSR), and 217–277 (LAAG…HSEK). Residues 7–20 (AKRGQQDGNQQSAQ) show a composition bias toward polar residues. The region spanning 20–131 (QPEKVGWVRK…WINALNSAIT (112 aa)) is the PH domain. Positions 83 to 92 (SKSRSKKNHS) are enriched in basic residues. Over residues 222-259 (RRSDSENVKLSEKGRSGTLPRHEVTSWDKPTQRKDSLD) the composition is skewed to basic and acidic residues.

In terms of processing, C-terminal fragments could be released during apoptosis via caspase-3-dependent cleavage.

It is found in the membrane. The protein localises to the nucleus. It localises to the cytoplasm. Plays a role in the regulation of the actin cytoskeleton through its interactions with actin capping protein (CP). In Gallus gallus (Chicken), this protein is Pleckstrin homology domain-containing family O member 1 (PLEKHO1).